Here is a 732-residue protein sequence, read N- to C-terminus: Polyribonucleotide nucleotidyltransferase (732 aa).

Asp-489 and Asp-495 together coordinate Mg(2+). Residues 556–615 (PKIDTIQIDVDKIKIVIGKGGETIDKIIAETGVKIDIDEEGLVQIFSSDQAAIDRTKEII) enclose the KH domain. Residues 625-693 (GEVYHAKVVR…DKGRVDASMK (69 aa)) enclose the S1 motif domain. A disordered region spans residues 691 to 732 (SMKALIPRPPKPEKKEEKASEAKEASNDQASKSQSETASEEK). Positions 700-716 (PKPEKKEEKASEAKEAS) are enriched in basic and acidic residues. Over residues 717–732 (NDQASKSQSETASEEK) the composition is skewed to polar residues.

This sequence belongs to the polyribonucleotide nucleotidyltransferase family. Requires Mg(2+) as cofactor.

It is found in the cytoplasm. The catalysed reaction is RNA(n+1) + phosphate = RNA(n) + a ribonucleoside 5'-diphosphate. Functionally, involved in mRNA degradation. Catalyzes the phosphorolysis of single-stranded polyribonucleotides processively in the 3'- to 5'-direction. The sequence is that of Polyribonucleotide nucleotidyltransferase from Streptococcus uberis (strain ATCC BAA-854 / 0140J).